A 291-amino-acid polypeptide reads, in one-letter code: Homeobox protein SIX2 (291 aa).

The homeobox DNA-binding region spans 124-183; sequence GEETSYCFKEKSRSVLREWYAHNPYPSPREKRELAEATGLTTTQVSNWFKNRRQRDRAAE. Residues 168–279 are disordered; that stretch reads VSNWFKNRRQ…HHHGLQDSIL (112 aa). Residues 179-190 show a composition bias toward basic and acidic residues; sequence DRAAEAKERENN. Over residues 224 to 233 the composition is skewed to low complexity; that stretch reads HSSSSPALLL. Over residues 249 to 259 the composition is skewed to pro residues; sequence PPGPSAVPVPV.

It belongs to the SIX/Sine oculis homeobox family. Interacts with TCF7L2; in a canonical Wnt signaling independent manner; prevents transcription of differentiation genes in cap mesenchyme. Interacts with OSR1; form a strong repressor complex with TCF7L2, TLE2 and TLE3 to prevent the activation of Wnt/beta-catenin target genes in the cap mesenchyme. Interacts with HOXA11, EYA1 and EYA3. As to expression, strongly expressed in skeletal muscle. Expressed in Wilms' tumor and in the cap mesenchyme of fetal kidney (at protein level).

It localises to the nucleus. Functionally, transcription factor that plays an important role in the development of several organs, including kidney, skull and stomach. During kidney development, maintains cap mesenchyme multipotent nephron progenitor cells in an undifferentiated state by opposing the inductive signals emanating from the ureteric bud and cooperates with WNT9B to promote renewing progenitor cells proliferation. Acts through its interaction with TCF7L2 and OSR1 in a canonical Wnt signaling independent manner preventing transcription of differentiation genes in cap mesenchyme such as WNT4. Also acts independently of OSR1 to activate expression of many cap mesenchyme genes, including itself, GDNF and OSR1. During craniofacial development plays a role in growth and elongation of the cranial base through regulation of chondrocyte differentiation. During stomach organogenesis, controls pyloric sphincter formation and mucosal growth through regulation of a gene network including NKX2-5, BMPR1B, BMP4, SOX9 and GREM1. During branchial arch development, acts to mediate HOXA2 control over the insulin-like growth factor pathway. May also be involved in limb tendon and ligament development. Plays a role in cell proliferation and migration. The protein is Homeobox protein SIX2 (SIX2) of Homo sapiens (Human).